A 181-amino-acid polypeptide reads, in one-letter code: PLAT domain-containing protein 1 (181 aa).

The signal sequence occupies residues 1-14 (MARRDVLLPFLLLL). The residue at position 15 (alanine 15) is an N-acetylalanine. A PLAT domain is found at 29–156 (CVYTFYLRTG…SPYELTAVRN (128 aa)).

In terms of tissue distribution, expressed in root tips, pericycle cells, lateral root primordia, stomata, leaf vasculature, hydathodes and floral organs.

Its subcellular location is the endoplasmic reticulum. The protein resides in the plastid. The protein localises to the chloroplast. It is found in the plastoglobule. Positive regulator of abiotic stress tolerance involved in the regulation of plant growth. May be a downstream target of the abscisic acid (ABA) signaling pathway. The protein is PLAT domain-containing protein 1 of Arabidopsis thaliana (Mouse-ear cress).